Reading from the N-terminus, the 86-residue chain is Small ribosomal subunit protein bS18 (86 aa).

The protein belongs to the bacterial ribosomal protein bS18 family. In terms of assembly, part of the 30S ribosomal subunit. Forms a tight heterodimer with protein bS6.

In terms of biological role, binds as a heterodimer with protein bS6 to the central domain of the 16S rRNA, where it helps stabilize the platform of the 30S subunit. The polypeptide is Small ribosomal subunit protein bS18 (Heliobacterium modesticaldum (strain ATCC 51547 / Ice1)).